A 72-amino-acid chain; its full sequence is Metallothionein-like protein type 2 A (72 aa).

The protein belongs to the metallothionein superfamily. Type 15 family. In terms of tissue distribution, leaves and roots.

Functionally, metallothioneins have a high content of cysteine residues that bind various heavy metals. The polypeptide is Metallothionein-like protein type 2 A (MTA) (Solanum lycopersicum (Tomato)).